The following is a 246-amino-acid chain: Nodulin-25 (246 aa).

Positions 1–24 (MVYSNTYMLLGLGVFVLLSSHVLA) are cleaved as a signal peptide.

Its subcellular location is the symbiosome. It localises to the peribacteroid space. Functionally, involved in the development and function of nodules. It might participate in the biological process of symbiotic nitrogen fixation. This chain is Nodulin-25 (NMS-25), found in Medicago sativa (Alfalfa).